Reading from the N-terminus, the 300-residue chain is GTPase Era (300 aa).

Residues 7 to 175 enclose the Era-type G domain; sequence KSGFAVMAGL…KTAVAETLPF (169 aa). The G1 stretch occupies residues 15-22; it reads GLPNAGKS. 15–22 serves as a coordination point for GTP; that stretch reads GLPNAGKS. Positions 41 to 45 are G2; the sequence is QMTRQ. A G3 region spans residues 62–65; the sequence is DTPG. GTP contacts are provided by residues 62–66 and 124–127; these read DTPGF and NKAD. The interval 124–127 is G4; the sequence is NKAD. Residues 154–156 are G5; it reads ISA. The KH type-2 domain maps to 198-283; it reads IREQIFNLYE…RLELEVSVEP (86 aa).

It belongs to the TRAFAC class TrmE-Era-EngA-EngB-Septin-like GTPase superfamily. Era GTPase family. Monomer.

It is found in the cytoplasm. The protein localises to the cell inner membrane. In terms of biological role, an essential GTPase that binds both GDP and GTP, with rapid nucleotide exchange. Plays a role in 16S rRNA processing and 30S ribosomal subunit biogenesis and possibly also in cell cycle regulation and energy metabolism. The protein is GTPase Era of Elusimicrobium minutum (strain Pei191).